The chain runs to 355 residues: Glucose-6-phosphatase 2 (355 aa).

The Lumenal segment spans residues 1–24 (MDFLHRNGVLIIQHLQKDYRAYYT). A helical membrane pass occupies residues 25 to 45 (FLNFMSNVGDPRNIFFIYFPL). Residues 46-56 (CFQFNQTVGTK) lie on the Cytoplasmic side of the membrane. The helical transmembrane segment at 57 to 77 (MIWVAVIGDWLNLIFKWILFG) threads the bilayer. The Lumenal portion of the chain corresponds to 78–115 (HRPYWWVQETQIYPNHSSPCLEQFPTTCETGPGSPSGH). Arg79 is a substrate binding site. Residue Asn92 is glycosylated (N-linked (GlcNAc...) asparagine). Residue His115 is the Proton donor of the active site. The chain crosses the membrane as a helical span at residues 116 to 136 (AMGASCVWYVMVTAALSHTVC). Residues 137-146 (GMDKFSITLH) are Cytoplasmic-facing. A helical membrane pass occupies residues 147–167 (RLTWSFLWSVFWLIQISVCIS). Residue Arg168 is a topological domain, lumenal. Residue Arg168 coordinates substrate. A helical transmembrane segment spans residues 169–189 (VFIATHFPHQVILGVIGGMLV). His174 (nucleophile) is an active-site residue. Residues 190–211 (AEAFEHTPGIQTASLGTYLKTN) lie on the Cytoplasmic side of the membrane. The chain crosses the membrane as a helical span at residues 212–232 (LFLFLFAVGFYLLLRVLNIDL). Over 233–261 (LWSVPIAKKWCANPDWIHIDTTPFAGLVR) the chain is Lumenal. Residues 262–282 (NLGVLFGLGFAINSEMFLLSC) form a helical membrane-spanning segment. The Cytoplasmic segment spans residues 283–293 (RGGNNYTLSFR). A helical membrane pass occupies residues 294–314 (LLCALTSLTILQLYHFLQIPT). Over 315 to 318 (HEEH) the chain is Lumenal. The helical transmembrane segment at 319–339 (LFYVLSFCKSASIPLTVVAFI) threads the bilayer. At 340-355 (PYSVHMLMKQSGKKSQ) the chain is on the cytoplasmic side. Positions 352–355 (KKSQ) match the Prevents secretion from ER motif.

Belongs to the glucose-6-phosphatase family. In terms of processing, N-glycosylated; the non-glycosylated form is more unstable and is degraded through the proteasome. Specifically expressed in pancreas and also detected to a lower extent in testis. Expressed by most islet cells in the pancreas (at protein level).

It is found in the endoplasmic reticulum membrane. The catalysed reaction is D-glucose 6-phosphate + H2O = D-glucose + phosphate. Its pathway is carbohydrate biosynthesis; gluconeogenesis. Functionally, may hydrolyze glucose-6-phosphate to glucose in the endoplasmic reticulum. May be responsible for glucose production through glycogenolysis and gluconeogenesis. The sequence is that of Glucose-6-phosphatase 2 (G6PC2) from Homo sapiens (Human).